Consider the following 880-residue polypeptide: Alanine--tRNA ligase (880 aa).

His-568, His-572, Cys-670, and His-674 together coordinate Zn(2+).

This sequence belongs to the class-II aminoacyl-tRNA synthetase family. The cofactor is Zn(2+).

It localises to the cytoplasm. The catalysed reaction is tRNA(Ala) + L-alanine + ATP = L-alanyl-tRNA(Ala) + AMP + diphosphate. In terms of biological role, catalyzes the attachment of alanine to tRNA(Ala) in a two-step reaction: alanine is first activated by ATP to form Ala-AMP and then transferred to the acceptor end of tRNA(Ala). Also edits incorrectly charged Ser-tRNA(Ala) and Gly-tRNA(Ala) via its editing domain. The polypeptide is Alanine--tRNA ligase (Exiguobacterium sibiricum (strain DSM 17290 / CCUG 55495 / CIP 109462 / JCM 13490 / 255-15)).